The following is a 310-amino-acid chain: L-lactate dehydrogenase (310 aa).

NAD(+)-binding positions include valine 17, aspartate 38, lysine 43, tyrosine 69, and 83-84 (GA). Substrate contacts are provided by glutamine 86 and arginine 92. NAD(+) contacts are provided by residues serine 105, 122–124 (ATN), and serine 147. Residue 124-127 (NPVD) participates in substrate binding. 152–155 (DTAR) lines the substrate pocket. The beta-D-fructose 1,6-bisphosphate site is built by arginine 157 and histidine 172. Histidine 179 acts as the Proton acceptor in catalysis. Tyrosine 218 is modified (phosphotyrosine). Threonine 227 contributes to the substrate binding site.

It belongs to the LDH/MDH superfamily. LDH family. As to quaternary structure, homotetramer.

It localises to the cytoplasm. The enzyme catalyses (S)-lactate + NAD(+) = pyruvate + NADH + H(+). It participates in fermentation; pyruvate fermentation to lactate; (S)-lactate from pyruvate: step 1/1. With respect to regulation, allosterically activated by fructose 1,6-bisphosphate (FBP). Its function is as follows. Catalyzes the conversion of lactate to pyruvate. This is L-lactate dehydrogenase from Halalkalibacterium halodurans (strain ATCC BAA-125 / DSM 18197 / FERM 7344 / JCM 9153 / C-125) (Bacillus halodurans).